A 267-amino-acid chain; its full sequence is Glutamate 5-kinase (267 aa).

ATP is bound at residue Lys-15. 3 residues coordinate substrate: Ser-55, Asp-142, and Asn-158. Residues 178–179 (SD) and 220–226 (TGGMATK) each bind ATP.

Belongs to the glutamate 5-kinase family.

Its subcellular location is the cytoplasm. The enzyme catalyses L-glutamate + ATP = L-glutamyl 5-phosphate + ADP. It participates in amino-acid biosynthesis; L-proline biosynthesis; L-glutamate 5-semialdehyde from L-glutamate: step 1/2. In terms of biological role, catalyzes the transfer of a phosphate group to glutamate to form L-glutamate 5-phosphate. The polypeptide is Glutamate 5-kinase (Ligilactobacillus salivarius (strain UCC118) (Lactobacillus salivarius)).